The chain runs to 147 residues: Transcriptional regulator MraZ (147 aa).

2 SpoVT-AbrB domains span residues 6-48 and 77-120; these read NFER…NSEE and TVEV…SKAK.

This sequence belongs to the MraZ family. As to quaternary structure, forms oligomers.

It localises to the cytoplasm. Its subcellular location is the nucleoid. The chain is Transcriptional regulator MraZ from Mycoplasmopsis pulmonis (strain UAB CTIP) (Mycoplasma pulmonis).